Reading from the N-terminus, the 369-residue chain is Deoxyhypusine synthase (369 aa).

Residues 105–109 (SNLIS), 131–133 (TAG), Glu-137, and Asp-238 contribute to the NAD(+) site. 136-137 (EE) serves as a coordination point for spermidine. Position 243 (Asp-243) interacts with spermidine. Gly-283 lines the NAD(+) pocket. His-288 is a spermidine binding site. 308–309 (TA) serves as a coordination point for NAD(+). Spermidine contacts are provided by residues 314–316 (GSD) and 323–329 (EAVSWGK). Lys-329 serves as the catalytic Nucleophile. 342–343 (DA) is a binding site for NAD(+).

It belongs to the deoxyhypusine synthase family. It depends on NAD(+) as a cofactor.

It carries out the reaction [eIF5A protein]-L-lysine + spermidine = [eIF5A protein]-deoxyhypusine + propane-1,3-diamine. The protein operates within protein modification; eIF5A hypusination. Functionally, catalyzes the NAD-dependent oxidative cleavage of spermidine and the subsequent transfer of the butylamine moiety of spermidine to the epsilon-amino group of a critical lysine residue of the eIF-5A precursor protein to form the intermediate deoxyhypusine residue. This is the first step of the post-translational modification of that lysine into an unusual amino acid residue named hypusine. Hypusination is unique to mature eIF-5A factor and is essential for its function. The polypeptide is Deoxyhypusine synthase (Dhps) (Mus musculus (Mouse)).